Here is a 637-residue protein sequence, read N- to C-terminus: Probable polypeptide N-acetylgalactosaminyltransferase 8 (637 aa).

The Cytoplasmic portion of the chain corresponds to 1–6 (MMFWRK). Residues 7–29 (LPKALFIGLTLAIAVNLLLVFSS) form a helical; Signal-anchor for type II membrane protein membrane-spanning segment. Residues 30–637 (KGTLQNLFTG…VRDWGQTNSQ (608 aa)) lie on the Lumenal side of the membrane. N-linked (GlcNAc...) asparagine glycans are attached at residues Asn85, Asn107, and Asn160. Disulfide bonds link Cys171–Cys404, Cys395–Cys474, Cys509–Cys525, Cys556–Cys571, and Cys599–Cys617. A catalytic subdomain A region spans residues 180–294 (LPSLSVILIF…VGWAEPILAR (115 aa)). Substrate contacts are provided by Asp221 and Arg255. Asp278, His280, and His409 together coordinate Mn(2+). A catalytic subdomain B region spans residues 351 to 412 (PVKSPSIMGI…PCSRIAHLER (62 aa)). 2 residues coordinate substrate: Arg412 and Tyr417. Residues 496–634 (GYGRMKNLLD…QHTVRDWGQT (139 aa)) enclose the Ricin B-type lectin domain.

Belongs to the glycosyltransferase 2 family. GalNAc-T subfamily. The cofactor is Mn(2+). In terms of tissue distribution, widely expressed. Expressed in heart, skeletal muscle, kidney, liver, small intestine and placenta. Weakly expressed in colon, thymus, spleen, lung and leukocyte.

The protein resides in the golgi apparatus membrane. It carries out the reaction L-seryl-[protein] + UDP-N-acetyl-alpha-D-galactosamine = a 3-O-[N-acetyl-alpha-D-galactosaminyl]-L-seryl-[protein] + UDP + H(+). The enzyme catalyses L-threonyl-[protein] + UDP-N-acetyl-alpha-D-galactosamine = a 3-O-[N-acetyl-alpha-D-galactosaminyl]-L-threonyl-[protein] + UDP + H(+). It functions in the pathway protein modification; protein glycosylation. Functionally, probably catalyzes the initial reaction in O-linked oligosaccharide biosynthesis, the transfer of an N-acetyl-D-galactosamine residue to a serine or threonine residue on the protein receptor. The protein is Probable polypeptide N-acetylgalactosaminyltransferase 8 (GALNT8) of Homo sapiens (Human).